The primary structure comprises 481 residues: Beta-1,3-glucan-binding protein (481 aa).

Residues 1 to 17 (MKVLVVFIFCLVRSTFG) form the signal peptide. The CBM39 domain maps to 19–123 (FEVPDALVEV…QKFVVKQLLD (105 aa)). One can recognise a GH16 domain in the interval 211-481 (HRLTIRPVPS…EVDYVKVSAL (271 aa)). N-linked (GlcNAc...) asparagine glycosylation is present at Asn-467.

The protein belongs to the insect beta-1,3-glucan binding protein family. In terms of processing, the N-terminus is blocked. As to expression, hemolymph.

It is found in the secreted. In terms of biological role, involved in the recognition of invading microorganisms. Binds specifically to beta-1,3-glucan and activates the phenoloxidase cascade. The sequence is that of Beta-1,3-glucan-binding protein (GRP) from Tenebrio molitor (Yellow mealworm beetle).